A 310-amino-acid polypeptide reads, in one-letter code: N-acetyl-gamma-glutamyl-phosphate reductase (310 aa).

Cys-117 is a catalytic residue.

The protein belongs to the NAGSA dehydrogenase family. Type 2 subfamily.

It is found in the cytoplasm. The enzyme catalyses N-acetyl-L-glutamate 5-semialdehyde + phosphate + NADP(+) = N-acetyl-L-glutamyl 5-phosphate + NADPH + H(+). It participates in amino-acid biosynthesis; L-arginine biosynthesis; N(2)-acetyl-L-ornithine from L-glutamate: step 3/4. In terms of biological role, catalyzes the NADPH-dependent reduction of N-acetyl-5-glutamyl phosphate to yield N-acetyl-L-glutamate 5-semialdehyde. This chain is N-acetyl-gamma-glutamyl-phosphate reductase, found in Brucella ovis (strain ATCC 25840 / 63/290 / NCTC 10512).